Here is a 459-residue protein sequence, read N- to C-terminus: Putrescine aminotransferase (459 aa).

Pyridoxal 5'-phosphate-binding positions include 150 to 151 and Gln-274; that span reads GT. Residue Lys-300 is modified to N6-(pyridoxal phosphate)lysine. Residue Thr-332 participates in pyridoxal 5'-phosphate binding.

This sequence belongs to the class-III pyridoxal-phosphate-dependent aminotransferase family. Putrescine aminotransferase subfamily. Pyridoxal 5'-phosphate serves as cofactor.

The enzyme catalyses an alkane-alpha,omega-diamine + 2-oxoglutarate = an omega-aminoaldehyde + L-glutamate. The catalysed reaction is putrescine + 2-oxoglutarate = 1-pyrroline + L-glutamate + H2O. It carries out the reaction cadaverine + 2-oxoglutarate = 5-aminopentanal + L-glutamate. It functions in the pathway amine and polyamine degradation; putrescine degradation; 4-aminobutanal from putrescine (transaminase route): step 1/1. Catalyzes the aminotransferase reaction from putrescine to 2-oxoglutarate, leading to glutamate and 4-aminobutanal, which spontaneously cyclizes to form 1-pyrroline. This is the first step in one of two pathways for putrescine degradation, where putrescine is converted into 4-aminobutanoate (gamma-aminobutyrate or GABA) via 4-aminobutanal. Also functions as a cadaverine transaminase in a a L-lysine degradation pathway to succinate that proceeds via cadaverine, glutarate and L-2-hydroxyglutarate. This chain is Putrescine aminotransferase, found in Salmonella choleraesuis (strain SC-B67).